The chain runs to 348 residues: Holliday junction branch migration complex subunit RuvB (348 aa).

The segment at 1 to 184 (MTLNRDMVSP…FGIVQRLEFY (184 aa)) is large ATPase domain (RuvB-L). ATP-binding residues include Leu-23, Arg-24, Gly-65, Lys-68, Thr-69, Thr-70, Arg-174, Tyr-184, and Arg-221. Residue Thr-69 coordinates Mg(2+). The small ATPAse domain (RuvB-S) stretch occupies residues 185–255 (AVDHLVLIVE…VAQKALDLLD (71 aa)). A head domain (RuvB-H) region spans residues 258-348 (SHGFDTMDRK…QEVSDLFPNE (91 aa)). DNA-binding residues include Arg-294, Arg-313, and Arg-318.

It belongs to the RuvB family. In terms of assembly, homohexamer. Forms an RuvA(8)-RuvB(12)-Holliday junction (HJ) complex. HJ DNA is sandwiched between 2 RuvA tetramers; dsDNA enters through RuvA and exits via RuvB. An RuvB hexamer assembles on each DNA strand where it exits the tetramer. Each RuvB hexamer is contacted by two RuvA subunits (via domain III) on 2 adjacent RuvB subunits; this complex drives branch migration. In the full resolvosome a probable DNA-RuvA(4)-RuvB(12)-RuvC(2) complex forms which resolves the HJ.

It is found in the cytoplasm. The enzyme catalyses ATP + H2O = ADP + phosphate + H(+). In terms of biological role, the RuvA-RuvB-RuvC complex processes Holliday junction (HJ) DNA during genetic recombination and DNA repair, while the RuvA-RuvB complex plays an important role in the rescue of blocked DNA replication forks via replication fork reversal (RFR). RuvA specifically binds to HJ cruciform DNA, conferring on it an open structure. The RuvB hexamer acts as an ATP-dependent pump, pulling dsDNA into and through the RuvAB complex. RuvB forms 2 homohexamers on either side of HJ DNA bound by 1 or 2 RuvA tetramers; 4 subunits per hexamer contact DNA at a time. Coordinated motions by a converter formed by DNA-disengaged RuvB subunits stimulates ATP hydrolysis and nucleotide exchange. Immobilization of the converter enables RuvB to convert the ATP-contained energy into a lever motion, pulling 2 nucleotides of DNA out of the RuvA tetramer per ATP hydrolyzed, thus driving DNA branch migration. The RuvB motors rotate together with the DNA substrate, which together with the progressing nucleotide cycle form the mechanistic basis for DNA recombination by continuous HJ branch migration. Branch migration allows RuvC to scan DNA until it finds its consensus sequence, where it cleaves and resolves cruciform DNA. The sequence is that of Holliday junction branch migration complex subunit RuvB from Nitrosococcus oceani (strain ATCC 19707 / BCRC 17464 / JCM 30415 / NCIMB 11848 / C-107).